Reading from the N-terminus, the 336-residue chain is uncharacterized protein (336 aa).

The tract at residues 162 to 195 (ARGLPVHSSFKQNNSSQTSSNKGTTTVAAGSGSD) is disordered. Positions 169-187 (SSFKQNNSSQTSSNKGTTT) are enriched in low complexity.

The protein belongs to the AHA1 family.

This is an uncharacterized protein from Schizosaccharomyces pombe (strain 972 / ATCC 24843) (Fission yeast).